Here is a 693-residue protein sequence, read N- to C-terminus: Polyribonucleotide nucleotidyltransferase (693 aa).

2 residues coordinate Mg(2+): D489 and D495. One can recognise a KH domain in the interval 556–615 (PQIHVMNINPAKIKDVVGRGGATVKGIVEKTGAQIDTSDSGEVKVFAKDKKSMDMAVAMI). In terms of domain architecture, S1 motif spans 625–693 (GQVYKGKIVK…GRVKLSLVAR (69 aa)).

Belongs to the polyribonucleotide nucleotidyltransferase family. In terms of assembly, component of the RNA degradosome, which is a multiprotein complex involved in RNA processing and mRNA degradation. The cofactor is Mg(2+).

It is found in the cytoplasm. It carries out the reaction RNA(n+1) + phosphate = RNA(n) + a ribonucleoside 5'-diphosphate. Functionally, involved in mRNA degradation. Catalyzes the phosphorolysis of single-stranded polyribonucleotides processively in the 3'- to 5'-direction. The polypeptide is Polyribonucleotide nucleotidyltransferase (Francisella tularensis subsp. mediasiatica (strain FSC147)).